A 296-amino-acid chain; its full sequence is tRNA dimethylallyltransferase (296 aa).

Residue 19-26 (GPTASGKS) coordinates ATP. 21–26 (TASGKS) provides a ligand contact to substrate.

The protein belongs to the IPP transferase family. Monomer. The cofactor is Mg(2+).

It carries out the reaction adenosine(37) in tRNA + dimethylallyl diphosphate = N(6)-dimethylallyladenosine(37) in tRNA + diphosphate. Its function is as follows. Catalyzes the transfer of a dimethylallyl group onto the adenine at position 37 in tRNAs that read codons beginning with uridine, leading to the formation of N6-(dimethylallyl)adenosine (i(6)A). The chain is tRNA dimethylallyltransferase from Dinoroseobacter shibae (strain DSM 16493 / NCIMB 14021 / DFL 12).